We begin with the raw amino-acid sequence, 206 residues long: Enterobactin synthase component D (206 aa).

Mg(2+)-binding residues include Asp-107, Glu-109, and Glu-152.

It belongs to the P-Pant transferase superfamily. EntD family. As to quaternary structure, entB, EntD, EntE, and EntF form a multienzyme complex called enterobactin synthase. Requires Mg(2+) as cofactor.

The protein localises to the membrane. It carries out the reaction apo-[aryl-carrier protein] + CoA = holo-[aryl-carrier protein] + adenosine 3',5'-bisphosphate + H(+). It catalyses the reaction apo-[peptidyl-carrier protein] + CoA = holo-[peptidyl-carrier protein] + adenosine 3',5'-bisphosphate + H(+). Its pathway is siderophore biosynthesis; enterobactin biosynthesis. Its function is as follows. Involved in the biosynthesis of the siderophore enterobactin (enterochelin), which is a macrocyclic trimeric lactone of N-(2,3-dihydroxybenzoyl)-serine. The serine trilactone serves as a scaffolding for the three catechol functionalities that provide hexadentate coordination for the tightly ligated iron(2+) atoms. Plays an essential role in the assembly of the enterobactin by catalyzing the transfer of the 4'-phosphopantetheine (Ppant) moiety from coenzyme A to the apo-domains of both EntB (ArCP domain) and EntF (PCP domain) to yield their holo-forms which make them competent for the activation of 2,3-dihydroxybenzoate (DHB) and L-serine, respectively. This chain is Enterobactin synthase component D, found in Escherichia coli (strain K12).